A 338-amino-acid polypeptide reads, in one-letter code: tRNA N6-adenosine threonylcarbamoyltransferase (338 aa).

His109 and His113 together coordinate Fe cation. Substrate is bound by residues 132-136, Asp165, Gly178, and Asn277; that span reads AISGA. Position 302 (Asp302) interacts with Fe cation.

Belongs to the KAE1 / TsaD family. Fe(2+) is required as a cofactor.

It is found in the cytoplasm. The enzyme catalyses L-threonylcarbamoyladenylate + adenosine(37) in tRNA = N(6)-L-threonylcarbamoyladenosine(37) in tRNA + AMP + H(+). Its function is as follows. Required for the formation of a threonylcarbamoyl group on adenosine at position 37 (t(6)A37) in tRNAs that read codons beginning with adenine. Is involved in the transfer of the threonylcarbamoyl moiety of threonylcarbamoyl-AMP (TC-AMP) to the N6 group of A37, together with TsaE and TsaB. TsaD likely plays a direct catalytic role in this reaction. In Chlamydia trachomatis serovar A (strain ATCC VR-571B / DSM 19440 / HAR-13), this protein is tRNA N6-adenosine threonylcarbamoyltransferase.